The chain runs to 286 residues: Rhomboid-type serine protease 2 (286 aa).

The next 6 membrane-spanning stretches (helical) occupy residues 18–38 (ITQYPALTVGLSVFTFLLLVI), 66–86 (SFYLLFHRGFTHWLLNVVGLF), 99–119 (VFTGVTLNVLAVTAGLQFCIV), 122–142 (LLYPNTQVIGLSGVVFSFMSF), 164–183 (VSIPTLYSPFIFLIVCMVLI), and 188–210 (FWGHLAGISSGYLLALGYIKFLY). Catalysis depends on Ser133, which acts as the Nucleophile. The active site involves His191.

Belongs to the peptidase S54 family.

It localises to the golgi apparatus membrane. The protein resides in the golgi apparatus. It is found in the cis-Golgi network membrane. The catalysed reaction is Cleaves type-1 transmembrane domains using a catalytic dyad composed of serine and histidine that are contributed by different transmembrane domains.. In terms of biological role, probable rhomboid-type serine protease that catalyzes intramembrane proteolysis. The chain is Rhomboid-type serine protease 2 (RBD2) from Debaryomyces hansenii (strain ATCC 36239 / CBS 767 / BCRC 21394 / JCM 1990 / NBRC 0083 / IGC 2968) (Yeast).